A 169-amino-acid polypeptide reads, in one-letter code: MKRTKKYPFLTLQRQRFHLNFENASSAAGIPAERDFYRWAWSALKNEYRRADISLILLDEEEARAYNRDYRGKDYATNVLSFALNEGEILPCQVSEKLYGDLIICPQVVLKEAAEQGKTPEQHFAHLTIHGTLHLMGYDHIEDDEAEIMEAEEIRLMRAAGFPNPYQED.

Positions 130, 134, and 140 each coordinate Zn(2+).

This sequence belongs to the endoribonuclease YbeY family. Zn(2+) serves as cofactor.

It is found in the cytoplasm. Its function is as follows. Single strand-specific metallo-endoribonuclease involved in late-stage 70S ribosome quality control and in maturation of the 3' terminus of the 16S rRNA. The sequence is that of Endoribonuclease YbeY from Neisseria meningitidis serogroup B (strain ATCC BAA-335 / MC58).